The sequence spans 231 residues: Hypoxanthine-guanine-xanthine phosphoribosyltransferase (231 aa).

GMP-binding positions include lysine 77, 144–152 (EDIIDTGKT), lysine 176, and aspartate 204. Aspartate 148 (proton acceptor) is an active-site residue. A Mg(2+)-binding site is contributed by aspartate 204.

The protein belongs to the purine/pyrimidine phosphoribosyltransferase family. As to quaternary structure, homotetramer. Mg(2+) serves as cofactor.

Its subcellular location is the cytoplasm. The catalysed reaction is IMP + diphosphate = hypoxanthine + 5-phospho-alpha-D-ribose 1-diphosphate. The enzyme catalyses GMP + diphosphate = guanine + 5-phospho-alpha-D-ribose 1-diphosphate. It catalyses the reaction XMP + diphosphate = xanthine + 5-phospho-alpha-D-ribose 1-diphosphate. The protein operates within purine metabolism; GMP biosynthesis via salvage pathway; GMP from guanine: step 1/1. It functions in the pathway purine metabolism; IMP biosynthesis via salvage pathway; IMP from hypoxanthine: step 1/1. Its pathway is purine metabolism; XMP biosynthesis via salvage pathway; XMP from xanthine: step 1/1. Its function is as follows. Catalyzes the transfer of a ribosyl phosphate group from 5-phosphoribose 1-diphosphate to the N(9) of hypoxanthine, guanine or xanthine, leading to IMP, GMP and XMP, respectively. Plays a central role in the generation of purine nucleotides through the purine salvage pathway. In Plasmodium falciparum (isolate K1 / Thailand), this protein is Hypoxanthine-guanine-xanthine phosphoribosyltransferase (LACZ).